Here is a 301-residue protein sequence, read N- to C-terminus: Lycopene elongase/hydratase (301 aa).

Residues 1 to 20 (MSADMAAQSESGEGGDDGRA) form a disordered region. A run of 9 helical transmembrane segments spans residues 39-59 (FWLY…SALA), 61-81 (LFGL…NVFL), 110-130 (PVNT…FAVA), 133-153 (VAWP…APPF), 160-180 (LLDS…YAAV), 186-206 (PMLA…FSAI), 229-249 (TYWY…AVDL), 252-272 (GALL…GVDV), and 276-296 (YWWY…GALW).

It belongs to the UbiA prenyltransferase family.

Its subcellular location is the cell membrane. The catalysed reaction is all-trans-lycopene + dimethylallyl diphosphate + H2O = dihydroisopentenyldehydrorhodopin + diphosphate. It catalyses the reaction isopentenyldehydrorhodopin + dimethylallyl diphosphate + H2O = dihydrobisanhydrobacterioruberin + diphosphate. The protein operates within carotenoid biosynthesis. In terms of biological role, involved in the biosynthesis of the acyclic C50 carotenoid bacterioruberin (BR). Acts as a bifunctional elongase/hydratase that catalyzes the elongation of lycopene by attaching a C(5) isoprene unit at C-2, as well as the hydroxylation of the previous end of the molecule. The enzyme acts at both ends of the substrate, and catalyzes the conversion of lycopene to the C(45) intermediate dihydroisopentenyldehydrorhodopin (DH-IDR) and the conversion of isopentenyldehydrorhodopin (IDR) to the C(50) carotenoid dihydrobisanhydrobacterioruberin (DH-BABR). Can also catalyze the conversion of lycopene to tetrahydrobisanhydrobacterioruberin (TH-BABR). This Haloferax volcanii (strain ATCC 29605 / DSM 3757 / JCM 8879 / NBRC 14742 / NCIMB 2012 / VKM B-1768 / DS2) (Halobacterium volcanii) protein is Lycopene elongase/hydratase.